The sequence spans 623 residues: Probable methyltransferase PMT8 (623 aa).

Residues 1–13 lie on the Cytoplasmic side of the membrane; that stretch reads MMRGRSDGGLKKR. A helical; Signal-anchor for type II membrane protein transmembrane segment spans residues 14–34; sequence LIASVCVVALFVCFLFMYYGS. Topologically, residues 35-623 are lumenal; sequence SSQGASALEY…LTSESLRDSE (589 aa). 3 N-linked (GlcNAc...) asparagine glycosylation sites follow: Asn-204, Asn-350, and Asn-588.

This sequence belongs to the methyltransferase superfamily.

The protein resides in the golgi apparatus membrane. The protein is Probable methyltransferase PMT8 of Arabidopsis thaliana (Mouse-ear cress).